A 434-amino-acid polypeptide reads, in one-letter code: UDP-N-acetylglucosamine 1-carboxyvinyltransferase (434 aa).

34 to 35 contributes to the phosphoenolpyruvate binding site; the sequence is KN. Arginine 104 contacts UDP-N-acetyl-alpha-D-glucosamine. Catalysis depends on cysteine 128, which acts as the Proton donor. Cysteine 128 carries the 2-(S-cysteinyl)pyruvic acid O-phosphothioketal modification. 2 residues coordinate UDP-N-acetyl-alpha-D-glucosamine: aspartate 319 and isoleucine 341.

Belongs to the EPSP synthase family. MurA subfamily.

The protein resides in the cytoplasm. The enzyme catalyses phosphoenolpyruvate + UDP-N-acetyl-alpha-D-glucosamine = UDP-N-acetyl-3-O-(1-carboxyvinyl)-alpha-D-glucosamine + phosphate. Its pathway is cell wall biogenesis; peptidoglycan biosynthesis. Cell wall formation. Adds enolpyruvyl to UDP-N-acetylglucosamine. The chain is UDP-N-acetylglucosamine 1-carboxyvinyltransferase from Prochlorococcus marinus (strain MIT 9313).